The primary structure comprises 634 residues: DNA-directed RNA polymerase subunit gamma (634 aa).

Residues Cys74, Cys76, Cys89, and Cys92 each contribute to the Zn(2+) site. Residues Asp471, Asp473, and Asp475 each coordinate Mg(2+).

This sequence belongs to the RNA polymerase beta' chain family. RpoC1 subfamily. In terms of assembly, in cyanobacteria the RNAP catalytic core is composed of 2 alpha, 1 beta, 1 beta', 1 gamma and 1 omega subunit. When a sigma factor is associated with the core the holoenzyme is formed, which can initiate transcription. The cofactor is Mg(2+). Zn(2+) is required as a cofactor.

It carries out the reaction RNA(n) + a ribonucleoside 5'-triphosphate = RNA(n+1) + diphosphate. Its function is as follows. DNA-dependent RNA polymerase catalyzes the transcription of DNA into RNA using the four ribonucleoside triphosphates as substrates. This is DNA-directed RNA polymerase subunit gamma from Synechococcus sp. (strain WH7803).